The following is a 630-amino-acid chain: tRNA uridine 5-carboxymethylaminomethyl modification enzyme MnmG (630 aa).

13 to 18 is an FAD binding site; sequence GGGHAG. 273–287 lines the NAD(+) pocket; the sequence is GPRYCPSIEDKVMRF.

It belongs to the MnmG family. As to quaternary structure, homodimer. Heterotetramer of two MnmE and two MnmG subunits. FAD serves as cofactor.

It localises to the cytoplasm. NAD-binding protein involved in the addition of a carboxymethylaminomethyl (cmnm) group at the wobble position (U34) of certain tRNAs, forming tRNA-cmnm(5)s(2)U34. This Actinobacillus pleuropneumoniae serotype 7 (strain AP76) protein is tRNA uridine 5-carboxymethylaminomethyl modification enzyme MnmG.